A 317-amino-acid chain; its full sequence is Beta-ketoacyl-[acyl-carrier-protein] synthase III (317 aa).

Active-site residues include Cys112 and His244. Residues 245 to 249 form an ACP-binding region; the sequence is QANLR. Residue Asn274 is part of the active site.

The protein belongs to the thiolase-like superfamily. FabH family. Homodimer.

It is found in the cytoplasm. It carries out the reaction malonyl-[ACP] + acetyl-CoA + H(+) = 3-oxobutanoyl-[ACP] + CO2 + CoA. It functions in the pathway lipid metabolism; fatty acid biosynthesis. In terms of biological role, catalyzes the condensation reaction of fatty acid synthesis by the addition to an acyl acceptor of two carbons from malonyl-ACP. Catalyzes the first condensation reaction which initiates fatty acid synthesis and may therefore play a role in governing the total rate of fatty acid production. Possesses both acetoacetyl-ACP synthase and acetyl transacylase activities. Its substrate specificity determines the biosynthesis of branched-chain and/or straight-chain of fatty acids. This chain is Beta-ketoacyl-[acyl-carrier-protein] synthase III, found in Shigella boydii serotype 4 (strain Sb227).